The primary structure comprises 173 residues: Photosystem I assembly protein Ycf3 (173 aa).

TPR repeat units follow at residues 35–68 (AFVY…EEDP), 72–105 (SYIL…NPRM), and 120–153 (GEKA…APNN).

This sequence belongs to the Ycf3 family.

It localises to the cellular thylakoid membrane. Its function is as follows. Essential for the assembly of the photosystem I (PSI) complex. May act as a chaperone-like factor to guide the assembly of the PSI subunits. In Microcystis aeruginosa (strain NIES-843 / IAM M-2473), this protein is Photosystem I assembly protein Ycf3.